We begin with the raw amino-acid sequence, 290 residues long: GTPase Era (290 aa).

An Era-type G domain is found at Lys2–Glu169. Residues Gly10–Ser17 form a G1 region. GTP is bound at residue Gly10 to Ser17. Positions Gln36–Asn40 are G2. Residues Asp57 to Gly60 form a G3 region. GTP-binding positions include Asp57–Phe61 and Asn119–Asp122. The G4 stretch occupies residues Asn119 to Asp122. The segment at Ile148–Ala150 is G5. Positions Leu200 to Lys276 constitute a KH type-2 domain.

This sequence belongs to the TRAFAC class TrmE-Era-EngA-EngB-Septin-like GTPase superfamily. Era GTPase family. As to quaternary structure, monomer.

It localises to the cytoplasm. It is found in the cell inner membrane. In terms of biological role, an essential GTPase that binds both GDP and GTP, with rapid nucleotide exchange. Plays a role in 16S rRNA processing and 30S ribosomal subunit biogenesis and possibly also in cell cycle regulation and energy metabolism. The chain is GTPase Era from Borreliella afzelii (strain PKo) (Borrelia afzelii).